We begin with the raw amino-acid sequence, 645 residues long: DEAD-box ATP-dependent RNA helicase 46 (645 aa).

Disordered stretches follow at residues 1 to 22 and 44 to 137; these read MAAT…KPWK and YERP…AGNE. The region spanning 15–49 is the WW domain; that stretch reads PNLPKPWKGLVDSRTGYLYFWNPETNVTQYERPAS. Low complexity predominate over residues 60-72; the sequence is VSSSVQTNQQSSS. Basic and acidic residues predominate over residues 77 to 91; sequence GKEDDKYGRGSDGPK. The segment covering 108–136 has biased composition (low complexity); the sequence is SSNDAASGLGNASSGGSSARGPPSSAAGN. Residues 161 to 189 carry the Q motif motif; the sequence is MSFEATGLPNELLREVYSAGFSAPSPIQA. The Helicase ATP-binding domain occupies 192–366; that stretch reads WPIAMQNRDI…ADLLVNPAQV (175 aa). Residue 205 to 212 participates in ATP binding; it reads AKTGSGKT. The DEAD box motif lies at 314 to 317; that stretch reads DEAD. One can recognise a Helicase C-terminal domain in the interval 395 to 539; sequence RLEQILRSQE…KVPPQVREMA (145 aa). A disordered region spans residues 532 to 645; sequence PPQVREMATR…FHEAMMMKNR (114 aa). Gly residues predominate over residues 556–597; sequence SSGGGGGRGGYGDSGYGGRGESGYGSRGDSGYGGRGDSGGRG. The segment covering 598 to 608 has biased composition (low complexity); sequence SWAPSRDSSGS. Residues 612–623 show a composition bias toward basic and acidic residues; the sequence is GRERSRSPERFR. Positions 624–634 are enriched in low complexity; sequence GGPPSTSSPPR.

This sequence belongs to the DEAD box helicase family. DDX5/DBP2 subfamily.

The catalysed reaction is ATP + H2O = ADP + phosphate + H(+). The sequence is that of DEAD-box ATP-dependent RNA helicase 46 (RH46) from Arabidopsis thaliana (Mouse-ear cress).